The following is a 98-amino-acid chain: snRNA-activating protein complex subunit 5 (98 aa).

Positions 73 to 82 (QTTLELSTKS) are enriched in polar residues. Residues 73–98 (QTTLELSTKSHVTEEEEEEEEEESDS) are disordered. Position 85 is a phosphothreonine (threonine 85). Acidic residues predominate over residues 86-98 (EEEEEEEEEESDS).

As to quaternary structure, part of the SNAPc complex composed of 5 subunits: SNAPC1, SNAPC2, SNAPC3, SNAPC4 and SNAPC5. SNAPC5 interacts with SNAPC4.

The protein localises to the nucleus. In terms of biological role, part of the SNAPc complex required for the transcription of both RNA polymerase II and III small-nuclear RNA genes. Binds to the proximal sequence element (PSE), a non-TATA-box basal promoter element common to these 2 types of genes. Recruits TBP and BRF2 to the U6 snRNA TATA box. This Homo sapiens (Human) protein is snRNA-activating protein complex subunit 5 (SNAPC5).